Reading from the N-terminus, the 1493-residue chain is Pleckstrin homology domain-containing family H member 2 (1493 aa).

A coiled-coil region spans residues 20 to 175 (LESQLMKFRV…LQEVQGKKSS (156 aa)). Disordered regions lie at residues 202 to 230 (SPPQ…DMEE), 245 to 335 (NNRG…SSSI), 363 to 439 (LNSP…LPPP), and 613 to 705 (SSSP…EPLE). The span at 208–230 (KSEEMSKISSKEPEFTEGKDMEE) shows a compositional bias: basic and acidic residues. Polar residues-rich tracts occupy residues 245–260 (NNRG…CGSE) and 267–281 (TSFA…NSGA). A compositionally biased stretch (basic and acidic residues) spans 374 to 388 (LSKKEQDSSSDELNK). Composition is skewed to polar residues over residues 389-409 (KFQS…TPSP), 421-432 (NSLSGKGTQLVP), and 676-698 (STDT…SSDN). PH domains are found at residues 703–797 (PLEK…NVLR) and 811–919 (KPTM…VAAG). In terms of domain architecture, MyTH4 spans 955–1110 (HSKEGIISPL…PSRMEILSTL (156 aa)). The FERM domain maps to 1121-1451 (FSIPVHFMNG…SYINNFHQQK (331 aa)). The interval 1474 to 1493 (MMGSQPLLSSSRPTKGPTLL) is disordered.

In terms of assembly, self-associates. Interacts with TGFB1I1. In terms of tissue distribution, kidney. Reduced expression in patients with focal segmental glomerulosclerosis.

Its subcellular location is the cytoplasm. The protein localises to the cytoskeleton. It localises to the cell membrane. It is found in the cell projection. The protein resides in the lamellipodium. In the kidney glomerulus may play a role in linking podocyte foot processes to the glomerular basement membrane. May be involved in stabilization of F-actin by attenuating its depolymerization. Can recruit TGFB1I1 from focal adhesions to podocyte lamellipodia. In Homo sapiens (Human), this protein is Pleckstrin homology domain-containing family H member 2 (PLEKHH2).